Here is a 293-residue protein sequence, read N- to C-terminus: Elongation factor Ts (293 aa).

The segment at 79-82 is involved in Mg(2+) ion dislocation from EF-Tu; it reads TDFV.

The protein belongs to the EF-Ts family.

Its subcellular location is the cytoplasm. Its function is as follows. Associates with the EF-Tu.GDP complex and induces the exchange of GDP to GTP. It remains bound to the aminoacyl-tRNA.EF-Tu.GTP complex up to the GTP hydrolysis stage on the ribosome. The chain is Elongation factor Ts from Macrococcus caseolyticus (strain JCSC5402) (Macrococcoides caseolyticum).